The following is a 230-amino-acid chain: 7-cyano-7-deazaguanine synthase (230 aa).

9–19 (ISGGLDSTTCL) serves as a coordination point for ATP. Residues C192, C202, C205, and C208 each coordinate Zn(2+).

It belongs to the QueC family. The cofactor is Zn(2+).

The catalysed reaction is 7-carboxy-7-deazaguanine + NH4(+) + ATP = 7-cyano-7-deazaguanine + ADP + phosphate + H2O + H(+). Its pathway is purine metabolism; 7-cyano-7-deazaguanine biosynthesis. Catalyzes the ATP-dependent conversion of 7-carboxy-7-deazaguanine (CDG) to 7-cyano-7-deazaguanine (preQ(0)). This chain is 7-cyano-7-deazaguanine synthase, found in Myxococcus xanthus (strain DK1622).